The primary structure comprises 428 residues: Probable 4-methylmuconolactone transporter (428 aa).

Topologically, residues 1–26 (MFAWYKAGSPQQKKTFWACYSGWALD) are cytoplasmic. Residues 27 to 47 (SFDMQMFSFLLPALTLTWGLT) traverse the membrane as a helical segment. The Periplasmic segment spans residues 48–50 (KAE). A helical membrane pass occupies residues 51 to 71 (VGVLGTVALVVTAIGGWGAGI). Topologically, residues 72–80 (LSDRYGRAR) are cytoplasmic. Residues 81 to 101 (ILVLAIIWFTLFGVLAGFAQS) traverse the membrane as a helical segment. Topologically, residues 102-110 (YQQLLIART) are periplasmic. A helical membrane pass occupies residues 111–131 (LQGLGFGGEWAVGAALMAEVI). At 132 to 145 (DSRHRGKAIGFVQS) the chain is on the cytoplasmic side. The helical transmembrane segment at 146–166 (GFALGWALAVVVATLLLAWLP) threads the bilayer. Residue Lys167 is a topological domain, periplasmic. A helical transmembrane segment spans residues 168–188 (EMAWRVAFWSGIIPALIVLFI). Residues 189–227 (RRHVKDSSMFERARQSRAPRASLSSVFNRKYARTLALSS) lie on the Cytoplasmic side of the membrane. The helical transmembrane segment at 228 to 248 (VLVIGLQAGCYAILVWLPSLL) threads the bilayer. The Periplasmic portion of the chain corresponds to 249–252 (NQRQ). Residues 253 to 273 (VAAGSMIVTVFIMAFGSFCGF) traverse the membrane as a helical segment. Topologically, residues 274–287 (AVTADLSDRIGRRP) are cytoplasmic. Residues 288–308 (TLILLSVCAWIVTVSYMLLPL) form a helical membrane-spanning segment. Over 309 to 314 (NTTLTA) the chain is Periplasmic. A helical membrane pass occupies residues 315-335 (ILGFLVGFSAIGMFAALGPFL). Topologically, residues 336 to 356 (SELFPTNVRTTCMGFAYNVGK) are cytoplasmic. The chain crosses the membrane as a helical span at residues 357–371 (SIGAGSVVGVGVLST). Residues 372–377 (HIGLAN) are Periplasmic-facing. A helical transmembrane segment spans residues 378-398 (AMGTFCLVAYAFAVFGIMLLP). Over 399-428 (ETRGIAIENIGEADAHSPAAPLAQPASARS) the chain is Cytoplasmic.

It belongs to the major facilitator superfamily. Sugar transporter (TC 2.A.1.1) family.

It localises to the cell inner membrane. In terms of biological role, probable uptake of 4-methylmuconolactone. This chain is Probable 4-methylmuconolactone transporter, found in Cupriavidus pinatubonensis (strain JMP 134 / LMG 1197) (Cupriavidus necator (strain JMP 134)).